The sequence spans 298 residues: Probable alpha-L-glutamate ligase (298 aa).

Residues 104-287 (MQLLSRHGIG…VAGKIIEFLE (184 aa)) form the ATP-grasp domain. ATP is bound by residues K141, 178–179 (EY), D187, and 211–213 (RSN). Mg(2+)-binding residues include D248, E260, and N262. Mn(2+) contacts are provided by D248, E260, and N262.

Belongs to the RimK family. It depends on Mg(2+) as a cofactor. Mn(2+) is required as a cofactor.

This Aeromonas salmonicida (strain A449) protein is Probable alpha-L-glutamate ligase.